The following is a 258-amino-acid chain: Thiazole synthase (258 aa).

The active-site Schiff-base intermediate with DXP is the Lys100. 1-deoxy-D-xylulose 5-phosphate is bound by residues Gly161, 187–188 (AG), and 209–210 (NT).

The protein belongs to the ThiG family. Homotetramer. Forms heterodimers with either ThiH or ThiS.

It is found in the cytoplasm. The catalysed reaction is [ThiS sulfur-carrier protein]-C-terminal-Gly-aminoethanethioate + 2-iminoacetate + 1-deoxy-D-xylulose 5-phosphate = [ThiS sulfur-carrier protein]-C-terminal Gly-Gly + 2-[(2R,5Z)-2-carboxy-4-methylthiazol-5(2H)-ylidene]ethyl phosphate + 2 H2O + H(+). The protein operates within cofactor biosynthesis; thiamine diphosphate biosynthesis. Functionally, catalyzes the rearrangement of 1-deoxy-D-xylulose 5-phosphate (DXP) to produce the thiazole phosphate moiety of thiamine. Sulfur is provided by the thiocarboxylate moiety of the carrier protein ThiS. In vitro, sulfur can be provided by H(2)S. In Campylobacter jejuni subsp. jejuni serotype O:6 (strain 81116 / NCTC 11828), this protein is Thiazole synthase.